A 352-amino-acid polypeptide reads, in one-letter code: Probable tyrosine-protein kinase DDB_G0290471 (352 aa).

A Protein kinase domain is found at 51–333 (IEYVCRLGSG…ISLNQIRSFY (283 aa)). ATP-binding positions include 57 to 65 (LGSGSLCRV) and lysine 78. Aspartate 175 functions as the Proton acceptor in the catalytic mechanism.

This sequence belongs to the protein kinase superfamily. TKL Tyr protein kinase family.

It catalyses the reaction L-tyrosyl-[protein] + ATP = O-phospho-L-tyrosyl-[protein] + ADP + H(+). The chain is Probable tyrosine-protein kinase DDB_G0290471 from Dictyostelium discoideum (Social amoeba).